The sequence spans 268 residues: MNDMNPGFVMPDVQSSHDTRQIPIQRVGVRGVRYPMSLQTPSGVLSTVGTFNLDVHLPADQKGTHMSRFVALLEEEREPLNLAQFQLLLEKMLEKLEADAGRIEVSFPYFVSKTAPVSGVQSLMDYEVTMIGEVRDGHTTVRVKALVPVTSLCPCSKKISQYGAHNQRSHITIDAELAADTPVEALIRMAEEEASCELWGLLKRPDEKFVTERAYENPKFVEDLVRDIAMRLNEDDRIVAYTLEAENFESIHNHSAYALIERDKRRAG.

The protein belongs to the GTP cyclohydrolase IV family.

The catalysed reaction is GTP + H2O = 7,8-dihydroneopterin 3'-triphosphate + formate + H(+). The protein operates within cofactor biosynthesis; 7,8-dihydroneopterin triphosphate biosynthesis; 7,8-dihydroneopterin triphosphate from GTP: step 1/1. In terms of biological role, converts GTP to 7,8-dihydroneopterin triphosphate. The sequence is that of GTP cyclohydrolase FolE2 from Ralstonia nicotianae (strain ATCC BAA-1114 / GMI1000) (Ralstonia solanacearum).